The sequence spans 535 residues: Palmdelphin (535 aa).

A coiled-coil region spans residues 1–105 (MEEAELLKER…KEELQVSTKE (105 aa)). Residues 423–450 (VVIDDDDDDDDDEEADKKGEENTKESVS) are disordered. Over residues 424 to 436 (VIDDDDDDDDDEE) the composition is skewed to acidic residues. A compositionally biased stretch (basic and acidic residues) spans 437 to 446 (ADKKGEENTK).

This sequence belongs to the paralemmin family.

It is found in the cytoplasm. Its subcellular location is the cell projection. The protein resides in the dendrite. The protein localises to the dendritic spine. The polypeptide is Palmdelphin (palmd) (Xenopus laevis (African clawed frog)).